The sequence spans 357 residues: Metacaspase-3 (357 aa).

His168 is an active-site residue. Positions 183, 199, and 200 each coordinate Ca(2+). Cys223 is a catalytic residue. Ca(2+) is bound at residue Asp230.

It belongs to the peptidase C14B family.

The protein localises to the recycling endosome. With respect to regulation, activated by Ca(2+). In terms of biological role, cysteine protease that cleaves specifically after arginine or lysine residues. In the bloodstream form, may cleave inactive metacaspase-4 MCA4 prior to MCA4 secretion. The chain is Metacaspase-3 from Trypanosoma brucei brucei.